The following is a 366-amino-acid chain: Phospho-N-acetylmuramoyl-pentapeptide-transferase (366 aa).

10 helical membrane passes run Ala27–Leu47, Thr71–Ala91, Leu93–Phe113, Leu134–Ala154, Phe174–Gly194, Gly205–Ala225, Leu245–Pro265, Ala268–Val288, Ile294–Val314, and Gln343–Leu363.

Belongs to the glycosyltransferase 4 family. MraY subfamily. The cofactor is Mg(2+).

It localises to the cell inner membrane. The catalysed reaction is UDP-N-acetyl-alpha-D-muramoyl-L-alanyl-gamma-D-glutamyl-meso-2,6-diaminopimeloyl-D-alanyl-D-alanine + di-trans,octa-cis-undecaprenyl phosphate = di-trans,octa-cis-undecaprenyl diphospho-N-acetyl-alpha-D-muramoyl-L-alanyl-D-glutamyl-meso-2,6-diaminopimeloyl-D-alanyl-D-alanine + UMP. The protein operates within cell wall biogenesis; peptidoglycan biosynthesis. Its function is as follows. Catalyzes the initial step of the lipid cycle reactions in the biosynthesis of the cell wall peptidoglycan: transfers peptidoglycan precursor phospho-MurNAc-pentapeptide from UDP-MurNAc-pentapeptide onto the lipid carrier undecaprenyl phosphate, yielding undecaprenyl-pyrophosphoryl-MurNAc-pentapeptide, known as lipid I. The sequence is that of Phospho-N-acetylmuramoyl-pentapeptide-transferase from Rhizobium etli (strain ATCC 51251 / DSM 11541 / JCM 21823 / NBRC 15573 / CFN 42).